We begin with the raw amino-acid sequence, 299 residues long: 33 kDa chaperonin (299 aa).

2 disulfides stabilise this stretch: C234-C236 and C268-C271.

Belongs to the HSP33 family. In terms of processing, under oxidizing conditions two disulfide bonds are formed involving the reactive cysteines. Under reducing conditions zinc is bound to the reactive cysteines and the protein is inactive.

It is found in the cytoplasm. Functionally, redox regulated molecular chaperone. Protects both thermally unfolding and oxidatively damaged proteins from irreversible aggregation. Plays an important role in the bacterial defense system toward oxidative stress. This chain is 33 kDa chaperonin, found in Pseudomonas putida (strain ATCC 700007 / DSM 6899 / JCM 31910 / BCRC 17059 / LMG 24140 / F1).